Reading from the N-terminus, the 101-residue chain is MDLEKQVDREENQDDLHFILLLLILLIRQSSSEGNPSDLRRQLVFAKELGVPVSKVNLINGDTLQNVIVKEVLTDLVIFQNPLNNTRSHVSLSSVVSWGAF.

Functionally, may be involved in maturation of the outermost layer of the spore. The chain is Protein CgeC (cgeC) from Bacillus subtilis (strain 168).